A 239-amino-acid polypeptide reads, in one-letter code: Fibroblast growth factor 3 (239 aa).

Positions 1–17 (MGLIWLLLLSLLEPGWP) are cleaved as a signal peptide. A glycan (N-linked (GlcNAc...) asparagine) is linked at asparagine 65. Positions 193–239 (QLQSGLPRPPGKGVQPRRRRQKQSPDNLEPSHVQASRLGSQLEASAH) are disordered. Residues 225-239 (VQASRLGSQLEASAH) show a composition bias toward polar residues.

This sequence belongs to the heparin-binding growth factors family. In terms of assembly, interacts with FGFR1 and FGFR2. Affinity between fibroblast growth factors (FGFs) and their receptors is increased by heparan sulfate glycosaminoglycans that function as coreceptors.

It is found in the secreted. Its function is as follows. Plays an important role in the regulation of embryonic development, cell proliferation, and cell differentiation. Required for normal ear development. In Homo sapiens (Human), this protein is Fibroblast growth factor 3 (FGF3).